We begin with the raw amino-acid sequence, 350 residues long: MKKAVVLSAVALLSGVCAVADESVLIDFAKLNADIMADKSGGMTHNRRTVLDYASLADTSYTDEQKALMRSSLAVAQWEVVLNSSARNPVAHAASRVIEAPVSEGAKSFAGERVLGVRVLFPTWDSNANAMIKPAFVIPAYEVMAQVDDQGNVQAPTEEEKASGKGRFEDGYGVVKNVGVLKSIAVNTYGMNYPHGLYVMMRDQDGEVHRYFMGYLLFDSWKELVWNNPSYISDVRSREVRLYPVYPASTPHVVFEGFMVTRDAAHAGGDYVGYFKDVKIIYDKAVLSTVRDFADEDLWGIQARREAERKRVEVARFGQQQVLRYIEQEKLATEVGFTPSGGAQRQEEQQ.

The N-terminal stretch at 1 to 20 (MKKAVVLSAVALLSGVCAVA) is a signal peptide.

As to quaternary structure, the flagellum consists of an outer layer composed of repeating units of FlaA around a core that contains several antigenically related polypeptides.

Its subcellular location is the periplasmic flagellum. It localises to the periplasm. In terms of biological role, component of the outer layer of the flagella. This chain is Flagellar filament outer layer protein (flaA), found in Treponema pallidum (strain Nichols).